We begin with the raw amino-acid sequence, 100 residues long: MKMSRLCLSIALLVLLGTLAASTPGCDTSNQAKAQRPDFCLEPPYTGPCKAKMIRYFYNAKAGFCETFVYGGCKAKSNNFRSAEDCMRTCGGAIGPRENL.

The N-terminal stretch at 1 to 21 is a signal peptide; sequence MKMSRLCLSIALLVLLGTLAA. The propeptide occupies 22–33; the sequence is STPGCDTSNQAK. The 51-residue stretch at 40-90 folds into the BPTI/Kunitz inhibitor domain; the sequence is CLEPPYTGPCKAKMIRYFYNAKAGFCETFVYGGCKAKSNNFRSAEDCMRTC. Disulfide bonds link Cys40-Cys90, Cys49-Cys73, and Cys65-Cys86. A propeptide is located at residue Leu100.

It is found in the secreted. This chain is Spleen trypsin inhibitor I, found in Bos taurus (Bovine).